A 103-amino-acid chain; its full sequence is Large ribosomal subunit protein bL21 (103 aa).

Belongs to the bacterial ribosomal protein bL21 family. In terms of assembly, part of the 50S ribosomal subunit. Contacts protein L20.

Its function is as follows. This protein binds to 23S rRNA in the presence of protein L20. This chain is Large ribosomal subunit protein bL21, found in Ralstonia pickettii (strain 12J).